The primary structure comprises 196 residues: Orotate phosphoribosyltransferase (196 aa).

A 5-phospho-alpha-D-ribose 1-diphosphate-binding site is contributed by 117–125 (EDIVTTGLS). Positions 121 and 149 each coordinate orotate.

This sequence belongs to the purine/pyrimidine phosphoribosyltransferase family. PyrE subfamily. Homodimer. It depends on Mg(2+) as a cofactor.

It carries out the reaction orotidine 5'-phosphate + diphosphate = orotate + 5-phospho-alpha-D-ribose 1-diphosphate. The protein operates within pyrimidine metabolism; UMP biosynthesis via de novo pathway; UMP from orotate: step 1/2. Its function is as follows. Catalyzes the transfer of a ribosyl phosphate group from 5-phosphoribose 1-diphosphate to orotate, leading to the formation of orotidine monophosphate (OMP). The chain is Orotate phosphoribosyltransferase from Methylorubrum populi (strain ATCC BAA-705 / NCIMB 13946 / BJ001) (Methylobacterium populi).